The following is a 340-amino-acid chain: Methionine import ATP-binding protein MetN 1 (340 aa).

The 241-residue stretch at 2-242 (IRLENVSVDF…PQHAYTKQLV (241 aa)) folds into the ABC transporter domain. 39 to 46 (GTSGAGKS) contacts ATP.

It belongs to the ABC transporter superfamily. Methionine importer (TC 3.A.1.24) family. As to quaternary structure, the complex is composed of two ATP-binding proteins (MetN), two transmembrane proteins (MetI) and a solute-binding protein (MetQ).

Its subcellular location is the cell inner membrane. The catalysed reaction is L-methionine(out) + ATP + H2O = L-methionine(in) + ADP + phosphate + H(+). The enzyme catalyses D-methionine(out) + ATP + H2O = D-methionine(in) + ADP + phosphate + H(+). In terms of biological role, part of the ABC transporter complex MetNIQ involved in methionine import. Responsible for energy coupling to the transport system. This Pectobacterium atrosepticum (strain SCRI 1043 / ATCC BAA-672) (Erwinia carotovora subsp. atroseptica) protein is Methionine import ATP-binding protein MetN 1.